Here is a 265-residue protein sequence, read N- to C-terminus: Transcription factor BHLH062 (265 aa).

Residues 1 to 26 (MVPRDRVNAAAAGGGGEGRLVQSGIV) are disordered. Positions 35–48 (PKRIHKSEREKLKR) are basic motif; degenerate. In terms of domain architecture, bHLH spans 35–85 (PKRIHKSEREKLKRDKQNDLFNELGNLLEPDRQNNGKACVLGETTRILKDL). The segment at 49–85 (DKQNDLFNELGNLLEPDRQNNGKACVLGETTRILKDL) is helix-loop-helix motif. Residues 75 to 130 (LGETTRILKDLLSQVESLRKENSSLKNESHYVALERNELHDDNSMLRTEILELQNE) are a coiled coil. Residues 200 to 265 (ESATSEDSEP…TNEEDRIGRS (66 aa)) are disordered. Basic and acidic residues predominate over residues 210-220 (SQEHGISDHVT). Residues 245–256 (QDQQCSSGTSGT) show a composition bias toward polar residues.

It belongs to the bHLH protein family. Interacts with TIFY11A/JAZ9.

It is found in the nucleus. Its function is as follows. Transcription factor that plays a positive role in salt stress tolerance. Interacts with TIFY11A/JAZ9 and binds to the promoter of some potassium ion transporter genes to regulate potassium homeostasis during salt stress. The polypeptide is Transcription factor BHLH062 (Oryza sativa subsp. japonica (Rice)).